A 168-amino-acid polypeptide reads, in one-letter code: 2-C-methyl-D-erythritol 2,4-cyclodiphosphate synthase (168 aa).

Residues Asp13 and His15 each contribute to the a divalent metal cation site. 4-CDP-2-C-methyl-D-erythritol 2-phosphate is bound by residues 13-15 (DVH) and 39-40 (HS). His47 contacts a divalent metal cation. Residues 61–63 (DIG), 66–70 (FPDTD), Phe144, and Lys147 each bind 4-CDP-2-C-methyl-D-erythritol 2-phosphate.

This sequence belongs to the IspF family. In terms of assembly, homotrimer. Requires a divalent metal cation as cofactor.

It carries out the reaction 4-CDP-2-C-methyl-D-erythritol 2-phosphate = 2-C-methyl-D-erythritol 2,4-cyclic diphosphate + CMP. Its pathway is isoprenoid biosynthesis; isopentenyl diphosphate biosynthesis via DXP pathway; isopentenyl diphosphate from 1-deoxy-D-xylulose 5-phosphate: step 4/6. Involved in the biosynthesis of isopentenyl diphosphate (IPP) and dimethylallyl diphosphate (DMAPP), two major building blocks of isoprenoid compounds. Catalyzes the conversion of 4-diphosphocytidyl-2-C-methyl-D-erythritol 2-phosphate (CDP-ME2P) to 2-C-methyl-D-erythritol 2,4-cyclodiphosphate (ME-CPP) with a corresponding release of cytidine 5-monophosphate (CMP). This is 2-C-methyl-D-erythritol 2,4-cyclodiphosphate synthase from Cupriavidus metallidurans (strain ATCC 43123 / DSM 2839 / NBRC 102507 / CH34) (Ralstonia metallidurans).